Reading from the N-terminus, the 290-residue chain is Arylamine N-acetyltransferase, pineal gland isozyme NAT-10 (290 aa).

C68 acts as the Acyl-thioester intermediate in catalysis. Catalysis depends on residues H107 and D122.

This sequence belongs to the arylamine N-acetyltransferase family.

The enzyme catalyses an arylamine + acetyl-CoA = an N-acetylarylamine + CoA. The polypeptide is Arylamine N-acetyltransferase, pineal gland isozyme NAT-10 (Gallus gallus (Chicken)).